A 344-amino-acid chain; its full sequence is Oxygen sensor histidine kinase NreB (344 aa).

Cys-58, Cys-61, Cys-73, and Cys-76 together coordinate [4Fe-4S] cluster. The 198-residue stretch at 147 to 344 (ENERKRISRE…GTIITLEVPV (198 aa)) folds into the Histidine kinase domain. His-158 bears the Phosphohistidine; by autocatalysis mark.

It depends on [4Fe-4S] cluster as a cofactor. Post-translationally, autophosphorylated.

It localises to the cytoplasm. The catalysed reaction is ATP + protein L-histidine = ADP + protein N-phospho-L-histidine.. Its function is as follows. Member of the two-component regulatory system NreB/NreC involved in the control of dissimilatory nitrate/nitrite reduction in response to oxygen. NreB functions as a direct oxygen sensor histidine kinase which is autophosphorylated, in the absence of oxygen, probably at the conserved histidine residue, and transfers its phosphate group probably to a conserved aspartate residue of NreC. NreB/NreC activates the expression of the nitrate (narGHJI) and nitrite (nir) reductase operons, as well as the putative nitrate transporter gene narT. The sequence is that of Oxygen sensor histidine kinase NreB (nreB) from Staphylococcus haemolyticus (strain JCSC1435).